A 429-amino-acid polypeptide reads, in one-letter code: Adenylosuccinate synthetase (429 aa).

Residues 12–18 (GDEGKGK) and 40–42 (GHT) each bind GTP. Asp13 serves as the catalytic Proton acceptor. Asp13 and Gly40 together coordinate Mg(2+). IMP is bound by residues 13-16 (DEGK), 38-41 (NAGH), Thr129, Arg143, Gln223, Thr238, and Arg302. The active-site Proton donor is His41. 298–304 (TVTGRPR) provides a ligand contact to substrate. GTP-binding positions include Arg304, 330 to 332 (KLD), and 412 to 414 (STS).

It belongs to the adenylosuccinate synthetase family. As to quaternary structure, homodimer. Requires Mg(2+) as cofactor.

The protein localises to the cytoplasm. It catalyses the reaction IMP + L-aspartate + GTP = N(6)-(1,2-dicarboxyethyl)-AMP + GDP + phosphate + 2 H(+). The protein operates within purine metabolism; AMP biosynthesis via de novo pathway; AMP from IMP: step 1/2. Plays an important role in the de novo pathway of purine nucleotide biosynthesis. Catalyzes the first committed step in the biosynthesis of AMP from IMP. This is Adenylosuccinate synthetase from Gluconobacter oxydans (strain 621H) (Gluconobacter suboxydans).